The sequence spans 654 residues: Probable Xaa-Pro aminopeptidase P (654 aa).

Positions 449, 460, 558, and 572 each coordinate Mn(2+).

This sequence belongs to the peptidase M24B family. Requires Mn(2+) as cofactor.

It catalyses the reaction Release of any N-terminal amino acid, including proline, that is linked to proline, even from a dipeptide or tripeptide.. Functionally, catalyzes the removal of a penultimate prolyl residue from the N-termini of peptides. This Neosartorya fischeri (strain ATCC 1020 / DSM 3700 / CBS 544.65 / FGSC A1164 / JCM 1740 / NRRL 181 / WB 181) (Aspergillus fischerianus) protein is Probable Xaa-Pro aminopeptidase P (ampp).